The following is a 321-amino-acid chain: Opticin (321 aa).

Residues methionine 1 to threonine 19 form the signal peptide. Tyrosine 61 is subject to Sulfotyrosine. The region spanning leucine 105–glutamine 142 is the LRRNT domain. LRR repeat units lie at residues threonine 143 to glycine 164, lysine 167 to leucine 188, alanine 191 to isoleucine 212, lysine 237 to serine 258, leucine 259 to aspartate 279, and proline 289 to tyrosine 309. Cysteine 278 and cysteine 311 form a disulfide bridge. Asparagine 301 carries N-linked (GlcNAc...) asparagine glycosylation.

This sequence belongs to the small leucine-rich proteoglycan (SLRP) family. SLRP class III subfamily. In terms of assembly, homodimer. In terms of processing, O-glycosylated (sialylated oligosaccharides). Post-translationally, sulfated on tyrosine residues. Proteolytically cleaved by MMP1, MMP2, MMP3, MMP7, MMP8, MMP9, ADAMTS4, and ADAMTS5. Proteolytically cleaved by MMP13.

The protein resides in the secreted. It localises to the extracellular space. It is found in the extracellular matrix. In terms of biological role, inhibits angiogenesis in the vitreous humor of the eye, and therefore represses neovascularization. Binds collagen fibrils. May be involved in collagen fiber organization via regulation of other members of the small leucine-rich repeat proteoglycan superfamily. This Bos taurus (Bovine) protein is Opticin (OPTC).